Here is a 391-residue protein sequence, read N- to C-terminus: ATP phosphoribosyltransferase regulatory subunit (391 aa).

The protein belongs to the class-II aminoacyl-tRNA synthetase family. HisZ subfamily. In terms of assembly, heteromultimer composed of HisG and HisZ subunits.

It is found in the cytoplasm. It functions in the pathway amino-acid biosynthesis; L-histidine biosynthesis; L-histidine from 5-phospho-alpha-D-ribose 1-diphosphate: step 1/9. Functionally, required for the first step of histidine biosynthesis. May allow the feedback regulation of ATP phosphoribosyltransferase activity by histidine. The protein is ATP phosphoribosyltransferase regulatory subunit of Prochlorococcus marinus (strain NATL2A).